Reading from the N-terminus, the 329-residue chain is Serpentine receptor class alpha-3 (329 aa).

Transmembrane regions (helical) follow at residues 25–45, 57–77, 104–124, 144–164, 187–207, 238–258, and 273–293; these read LIYFVLIITTLFFTFFALKVI, ILLYQNLFSANIHQIFLGITI, YLEMFIAGLSGMVYGQTGLLF, GIITSIIVLLLSGSTARIIIW, TMFFSICTFISLFNLVISLLI, ICFLTFFQFIFMFIYSFGVFL, and FWVVWVYTIPFIAASFPILLI.

This sequence belongs to the nematode receptor-like protein sra family.

It localises to the membrane. The chain is Serpentine receptor class alpha-3 (sra-3) from Caenorhabditis elegans.